The sequence spans 234 residues: Phosphoribosylaminoimidazole-succinocarboxamide synthase (234 aa).

It belongs to the SAICAR synthetase family.

The catalysed reaction is 5-amino-1-(5-phospho-D-ribosyl)imidazole-4-carboxylate + L-aspartate + ATP = (2S)-2-[5-amino-1-(5-phospho-beta-D-ribosyl)imidazole-4-carboxamido]succinate + ADP + phosphate + 2 H(+). Its pathway is purine metabolism; IMP biosynthesis via de novo pathway; 5-amino-1-(5-phospho-D-ribosyl)imidazole-4-carboxamide from 5-amino-1-(5-phospho-D-ribosyl)imidazole-4-carboxylate: step 1/2. The polypeptide is Phosphoribosylaminoimidazole-succinocarboxamide synthase (Staphylococcus aureus (strain MRSA252)).